A 261-amino-acid chain; its full sequence is Thioesterase TesA (261 aa).

Positions 1–24 (MLARHGPRYGGSVNGHSDDSSGDA) are disordered. Residues serine 104, aspartate 208, and histidine 236 contribute to the active site.

It belongs to the thioesterase family.

It carries out the reaction a fatty acyl-CoA + H2O = a fatty acid + CoA + H(+). Involved in the synthesis of both phthiocerol dimycocerosates (PDIMs) and phenolic glycolipids (PGLs), which are structurally related lipids non-covalently bound to the outer cell wall layer of M.tuberculosis and are important virulence factors. The chain is Thioesterase TesA (tesA) from Mycobacterium bovis (strain ATCC BAA-935 / AF2122/97).